An 859-amino-acid chain; its full sequence is DNA mismatch repair protein MutS (859 aa).

618 to 625 (GPNMGGKS) is an ATP binding site.

It belongs to the DNA mismatch repair MutS family.

In terms of biological role, this protein is involved in the repair of mismatches in DNA. It is possible that it carries out the mismatch recognition step. This protein has a weak ATPase activity. This Shewanella sediminis (strain HAW-EB3) protein is DNA mismatch repair protein MutS.